The primary structure comprises 776 residues: Protocadherin beta-16 (776 aa).

The signal sequence occupies residues 1-28 (MEIGWMHNRRQRQVLVFFVLLSLSGAGA). Topologically, residues 29 to 690 (ELGSYSVVEE…TQANSLTVYL (662 aa)) are extracellular. 5 consecutive Cadherin domains span residues 35–133 (VVEE…SPMF), 138–242 (MILK…APEF), 247–347 (YKVQ…PPQV), 352–451 (LTSP…APTF), and 456–561 (YTLF…SPFV). N418 and N436 each carry an N-linked (GlcNAc...) asparagine glycan. N567 is a glycosylation site (N-linked (GlcNAc...) asparagine). Residues 568-671 (GSAPCTELVP…LVDGFSQPFL (104 aa)) form the Cadherin 6 domain. Residues 691–711 (VVALASVSSLFLFSVLLFVAV) traverse the membrane as a helical segment. The Cytoplasmic portion of the chain corresponds to 712-776 (RLCRRSRAAS…LKPIIPNFSP (65 aa)).

The protein localises to the membrane. Its function is as follows. Potential calcium-dependent cell-adhesion protein. May be involved in the establishment and maintenance of specific neuronal connections in the brain. This chain is Protocadherin beta-16, found in Homo sapiens (Human).